Consider the following 362-residue polypeptide: ATP synthase F(1) complex catalytic subunit beta, mitochondrial (362 aa).

Residue Lys-14 is modified to N6-acetyllysine; alternate. The residue at position 14 (Lys-14) is an N6-succinyllysine; alternate. Lys-51 carries the N6-acetyllysine modification. ADP-binding residues include Val-62, Val-63, Gly-64, Lys-65, Thr-66, and Val-67. Val-62 contacts ATP. Phosphate contacts are provided by Val-62, Val-63, Gly-64, Lys-65, and Thr-66. Residues Gly-64, Lys-65, Thr-66, and Val-67 each contribute to the ATP site. Residue Thr-66 participates in Mg(2+) binding. A Mg(2+)-binding site is contributed by Glu-91. Lys-112 and Lys-117 each carry N6-acetyllysine; alternate. 2 positions are modified to N6-succinyllysine; alternate: Lys-112 and Lys-117. Phosphothreonine is present on Thr-165. At Lys-279 the chain carries N6-acetyllysine. Ser-286 is subject to Phosphoserine. N6-acetyllysine is present on residues Lys-333 and Lys-338.

It belongs to the ATPase alpha/beta chains family. Homotrimer. Component of the ATP synthase complex composed at least of ATP5F1A/subunit alpha, ATP5F1B/subunit beta, ATP5MC1/subunit c (homooctomer), MT-ATP6/subunit a, MT-ATP8/subunit 8, ATP5ME/subunit e, ATP5MF/subunit f, ATP5MG/subunit g, ATP5MK/subunit k, ATP5MJ/subunit j, ATP5F1C/subunit gamma, ATP5F1D/subunit delta, ATP5F1E/subunit epsilon, ATP5PF/subunit F6, ATP5PB/subunit b, ATP5PD/subunit d, ATP5PO/subunit OSCP. ATP synthase complex consists of a soluble F(1) head domain (subunits alpha(3) and beta(3)) - the catalytic core - and a membrane F(0) domain - the membrane proton channel (subunits c, a, 8, e, f, g, k and j). These two domains are linked by a central stalk (subunits gamma, delta, and epsilon) rotating inside the F1 region and a stationary peripheral stalk (subunits F6, b, d, and OSCP). Interacts with PPIF. Interacts with BCL2L1 isoform BCL-X(L); the interaction mediates the association of BCL2L1 isoform BCL-X(L) with the mitochondrial membrane F(1)F(0) ATP synthase and enhances neurons metabolic efficiency. Interacts with CLN5 and PPT1. Interacts with S100A1; this interaction increases F1-ATPase activity. Interacts with MTLN. Interacts with TTC5/STRAP; the interaction results in decreased mitochondrial ATP production.

It is found in the mitochondrion inner membrane. It catalyses the reaction ATP + H2O + 4 H(+)(in) = ADP + phosphate + 5 H(+)(out). Its function is as follows. Catalytic subunit beta, of the mitochondrial membrane ATP synthase complex (F(1)F(0) ATP synthase or Complex V) that produces ATP from ADP in the presence of a proton gradient across the membrane which is generated by electron transport complexes of the respiratory chain. ATP synthase complex consist of a soluble F(1) head domain - the catalytic core - and a membrane F(1) domain - the membrane proton channel. These two domains are linked by a central stalk rotating inside the F(1) region and a stationary peripheral stalk. During catalysis, ATP synthesis in the catalytic domain of F(1) is coupled via a rotary mechanism of the central stalk subunits to proton translocation. In vivo, can only synthesize ATP although its ATP hydrolase activity can be activated artificially in vitro. With the subunit alpha (ATP5F1A), forms the catalytic core in the F(1) domain. The protein is ATP synthase F(1) complex catalytic subunit beta, mitochondrial of Mesocricetus auratus (Golden hamster).